A 1372-amino-acid chain; its full sequence is uncharacterized protein (1372 aa).

Positions 1–67 (MEATDQEVML…PPAPSKNPMQ (67 aa)) are disordered. Positions 17 to 28 (MSTSATSSTNGG) are enriched in polar residues. Residues 75-143 (NLYQTAQEQL…LEEHDRLRRK (69 aa)) adopt a coiled-coil conformation. Disordered stretches follow at residues 178–199 (NDLSDLGIGTSSASGKSSLSGD), 238–287 (HINR…QASS), 380–414 (EVSNGGAPAAPKLVFRDGLTNGNSATTAPKSEVRR), 427–447 (QSLEQQRKAFSSSKSVDVPVP), and 486–531 (EERM…DSGI). 2 stretches are compositionally biased toward low complexity: residues 184-198 (GIGTSSASGKSSLSG) and 238-251 (HINRNGSNGNHGNG). 2 stretches are compositionally biased toward polar residues: residues 257–287 (TGPSNSSKSAGRQYISSPGYDTSSSNAQASS) and 399–408 (TNGNSATTAP). A coiled-coil region spans residues 409-438 (KSEVRRLSGDISSIRDRMQSLEQQRKAFSS). Residues 486 to 499 (EERMRQQQQKEKHS) show a composition bias toward basic and acidic residues. Over residues 514–523 (ALIIEEPPVA) the composition is skewed to low complexity. Residues 539 to 580 (LQQQQQLNAAIAALALEERQLEEAANAVNQIEAEFDELTDLH) are a coiled coil. Residues 652–673 (VSKSGPTPNPTSTPNMVSSSPN) are compositionally biased toward low complexity. 5 disordered regions span residues 652–679 (VSKSGPTPNPTSTPNMVSSSPNCNLRRK), 799–820 (SRQLDKPPTPPAPPKKTVRSEH), 860–897 (SQSDSKSLTSPIMSPKPLPSGRIPQITPPASPKPPKRV), 1151–1181 (SSQMMKTSLPESVEKPSTPLPGRKSKIPIPK), and 1231–1250 (SPPSIPKTPEQTQLHASPTK). Polar residues-rich tracts occupy residues 860–871 (SQSDSKSLTSPI) and 1151–1160 (SSQMMKTSLP).

This is an uncharacterized protein from Drosophila melanogaster (Fruit fly).